The chain runs to 102 residues: Small ribosomal subunit protein uS10 (102 aa).

The protein belongs to the universal ribosomal protein uS10 family. In terms of assembly, part of the 30S ribosomal subunit.

Its function is as follows. Involved in the binding of tRNA to the ribosomes. The protein is Small ribosomal subunit protein uS10 of Methylocella silvestris (strain DSM 15510 / CIP 108128 / LMG 27833 / NCIMB 13906 / BL2).